The sequence spans 313 residues: Dimethyladenosine transferase (313 aa).

S-adenosyl-L-methionine is bound by residues histidine 37, leucine 39, glycine 64, glutamate 85, aspartate 113, and asparagine 128.

Belongs to the class I-like SAM-binding methyltransferase superfamily. rRNA adenine N(6)-methyltransferase family. In terms of assembly, part of the small subunit (SSU) processome, composed of more than 70 proteins and the RNA chaperone small nucleolar RNA (snoRNA) U3.

The protein localises to the nucleus. Its subcellular location is the nucleoplasm. It localises to the nucleolus. It carries out the reaction adenosine(1779)/adenosine(1780) in 18S rRNA + 4 S-adenosyl-L-methionine = N(6)-dimethyladenosine(1779)/N(6)-dimethyladenosine(1780) in 18S rRNA + 4 S-adenosyl-L-homocysteine + 4 H(+). Specifically dimethylates two adjacent adenosines in the loop of a conserved hairpin near the 3'-end of 18S rRNA in the 40S particle. Involved in the pre-rRNA processing steps leading to small-subunit rRNA production independently of its RNA-modifying catalytic activity. Part of the small subunit (SSU) processome, first precursor of the small eukaryotic ribosomal subunit. During the assembly of the SSU processome in the nucleolus, many ribosome biogenesis factors, an RNA chaperone and ribosomal proteins associate with the nascent pre-rRNA and work in concert to generate RNA folding, modifications, rearrangements and cleavage as well as targeted degradation of pre-ribosomal RNA by the RNA exosome. The sequence is that of Dimethyladenosine transferase (Dimt1) from Mus musculus (Mouse).